We begin with the raw amino-acid sequence, 188 residues long: UPF0301 protein PD_1276 (188 aa).

It belongs to the UPF0301 (AlgH) family.

The sequence is that of UPF0301 protein PD_1276 from Xylella fastidiosa (strain Temecula1 / ATCC 700964).